A 431-amino-acid chain; its full sequence is 23S rRNA (uracil(1939)-C(5))-methyltransferase RlmD (431 aa).

Positions 10–68 constitute a TRAM domain; sequence RVTTRQIITVKVNDLDSFGQGVARHNGKALFIPGLLPEESAEVIITEDKKQFARARVSR. 4 residues coordinate [4Fe-4S] cluster: cysteine 81, cysteine 87, cysteine 90, and cysteine 161. Positions 264, 293, 298, 314, 341, and 362 each coordinate S-adenosyl-L-methionine. The Nucleophile role is filled by cysteine 388.

This sequence belongs to the class I-like SAM-binding methyltransferase superfamily. RNA M5U methyltransferase family. RlmD subfamily.

It carries out the reaction uridine(1939) in 23S rRNA + S-adenosyl-L-methionine = 5-methyluridine(1939) in 23S rRNA + S-adenosyl-L-homocysteine + H(+). Its function is as follows. Catalyzes the formation of 5-methyl-uridine at position 1939 (m5U1939) in 23S rRNA. The protein is 23S rRNA (uracil(1939)-C(5))-methyltransferase RlmD of Salmonella choleraesuis (strain SC-B67).